A 357-amino-acid polypeptide reads, in one-letter code: MSKQILILPGDGIGPEIMAEAVKVLTRIDTQHTLGVTLVYDELGGAAYDKYGSPLADETLERARAADAVLLGAVGGPQWDTIDPALRPERGLLKIRSQLGLFANLRPALLYPQLADASTLKPEVVSGLDLLILRELTGGIYFGQPRGTRTLDNGERQAYDTLPYSESEIRRIAKAGFEMARLRGKKLCSVDKANVLASSQLWRAVVEEVAKDYPDIALSHMYVDNAAMQLVRAPKQFDVIVTDNMFGDILSDQASMLTGSIGMLPSASLDANSKGMYEPCHGSAPDIAGQGIANPLATILSVAMMLRYTFAQAAAADAIEAAVGKVLDQGLRTADIWSEGTTKVGTAAMGDAVVAAL.

NAD(+) is bound at residue 76–89; that stretch reads GPQWDTIDPALRPE. 4 residues coordinate substrate: Arg-96, Arg-106, Arg-134, and Asp-224. Mg(2+) is bound by residues Asp-224, Asp-248, and Asp-252. 282–294 serves as a coordination point for NAD(+); the sequence is GSAPDIAGQGIAN.

The protein belongs to the isocitrate and isopropylmalate dehydrogenases family. LeuB type 1 subfamily. Homodimer. Mg(2+) is required as a cofactor. It depends on Mn(2+) as a cofactor.

Its subcellular location is the cytoplasm. The enzyme catalyses (2R,3S)-3-isopropylmalate + NAD(+) = 4-methyl-2-oxopentanoate + CO2 + NADH. It participates in amino-acid biosynthesis; L-leucine biosynthesis; L-leucine from 3-methyl-2-oxobutanoate: step 3/4. In terms of biological role, catalyzes the oxidation of 3-carboxy-2-hydroxy-4-methylpentanoate (3-isopropylmalate) to 3-carboxy-4-methyl-2-oxopentanoate. The product decarboxylates to 4-methyl-2 oxopentanoate. The sequence is that of 3-isopropylmalate dehydrogenase from Xanthomonas campestris pv. campestris (strain 8004).